Consider the following 362-residue polypeptide: Probable secreted beta-glucosidase UTH1 (362 aa).

The signal sequence occupies residues 1-17 (MKLSALLALSASTAVLA).

The protein belongs to the SUN family.

The protein resides in the mitochondrion outer membrane. The protein localises to the secreted. It is found in the cell wall. Its function is as follows. Involved in aging, oxidative stress response, and in the regulation of mitochondrial biogenesis. Inactivation of UTH1 increases life span, leads to higher resistance to heat stress and to hydrogen peroxide, and increases sensitivity to the superoxide radical-generating drug paraquat and to copper. Also required for the selective autophagic degradation of mitochondria (mitophagy) in response to nitrogen starvation. Involved in the remodeling of the cell wall during the various phases of yeast culture development and under various environmental conditions and plays a role in septation. Involved in cell sensitivity to boric acid. The sequence is that of Probable secreted beta-glucosidase UTH1 (UTH1) from Saccharomyces cerevisiae (strain RM11-1a) (Baker's yeast).